The chain runs to 521 residues: Glutamyl-tRNA(Gln) amidotransferase subunit B, mitochondrial (521 aa).

Residues 1–22 constitute a mitochondrion transit peptide; sequence MIALLRWGIARPSAPLRWSRCF.

It belongs to the GatB/GatE family. GatB subfamily. As to quaternary structure, subunit of the heterotrimeric GatCAB amidotransferase (AdT) complex, composed of A, B and C subunits.

The protein localises to the mitochondrion. It catalyses the reaction L-glutamyl-tRNA(Gln) + L-glutamine + ATP + H2O = L-glutaminyl-tRNA(Gln) + L-glutamate + ADP + phosphate + H(+). Allows the formation of correctly charged Gln-tRNA(Gln) through the transamidation of misacylated Glu-tRNA(Gln) in the mitochondria. The reaction takes place in the presence of glutamine and ATP through an activated gamma-phospho-Glu-tRNA(Gln). The polypeptide is Glutamyl-tRNA(Gln) amidotransferase subunit B, mitochondrial (Cryptococcus neoformans var. neoformans serotype D (strain JEC21 / ATCC MYA-565) (Filobasidiella neoformans)).